Reading from the N-terminus, the 398-residue chain is UDP-N-acetylglucosamine--N-acetylmuramyl-(pentapeptide) pyrophosphoryl-undecaprenol N-acetylglucosamine transferase (398 aa).

Residues 11 to 13 (TGG), Asn124, Arg164, Ser192, and Gln318 each bind UDP-N-acetyl-alpha-D-glucosamine.

This sequence belongs to the glycosyltransferase 28 family. MurG subfamily.

The protein localises to the cell membrane. The catalysed reaction is di-trans,octa-cis-undecaprenyl diphospho-N-acetyl-alpha-D-muramoyl-L-alanyl-D-glutamyl-meso-2,6-diaminopimeloyl-D-alanyl-D-alanine + UDP-N-acetyl-alpha-D-glucosamine = di-trans,octa-cis-undecaprenyl diphospho-[N-acetyl-alpha-D-glucosaminyl-(1-&gt;4)]-N-acetyl-alpha-D-muramoyl-L-alanyl-D-glutamyl-meso-2,6-diaminopimeloyl-D-alanyl-D-alanine + UDP + H(+). The protein operates within cell wall biogenesis; peptidoglycan biosynthesis. In terms of biological role, cell wall formation. Catalyzes the transfer of a GlcNAc subunit on undecaprenyl-pyrophosphoryl-MurNAc-pentapeptide (lipid intermediate I) to form undecaprenyl-pyrophosphoryl-MurNAc-(pentapeptide)GlcNAc (lipid intermediate II). The protein is UDP-N-acetylglucosamine--N-acetylmuramyl-(pentapeptide) pyrophosphoryl-undecaprenol N-acetylglucosamine transferase of Deinococcus radiodurans (strain ATCC 13939 / DSM 20539 / JCM 16871 / CCUG 27074 / LMG 4051 / NBRC 15346 / NCIMB 9279 / VKM B-1422 / R1).